A 132-amino-acid chain; its full sequence is Large ribosomal subunit protein uL14 (132 aa).

The protein belongs to the universal ribosomal protein uL14 family. In terms of assembly, part of the 50S ribosomal subunit. Forms a cluster with proteins L3 and L24e, part of which may contact the 16S rRNA in 2 intersubunit bridges.

Binds to 23S rRNA. Forms part of two intersubunit bridges in the 70S ribosome. The protein is Large ribosomal subunit protein uL14 of Natronomonas pharaonis (strain ATCC 35678 / DSM 2160 / CIP 103997 / JCM 8858 / NBRC 14720 / NCIMB 2260 / Gabara) (Halobacterium pharaonis).